Here is a 994-residue protein sequence, read N- to C-terminus: Chloride channel protein 1 (994 aa).

Residues 1–118 (MERSQSQRHG…VLRRKLGEDW (118 aa)) lie on the Cytoplasmic side of the membrane. A helical transmembrane segment spans residues 119 to 150 (IFLVLLGLLMALVSWCMDYVSAKSLQAYKWTY). At 151–158 (AQMKPSLP) the chain is on the extracellular side. Residues 159 to 179 (LQYLAWVTFPLILILFSALFC) form a helical membrane-spanning segment. Residues 180 to 183 (QLIS) lie on the Cytoplasmic side of the membrane. The segment at residues 184-189 (PQAVGS) is an intramembrane region (note=Loop between two helices). Residues 188 to 192 (GSGIP) carry the Selectivity filter part_1 motif. S189 contacts chloride. An intramembrane region (helical) is located at residues 190–195 (GIPEMK). Residues 196-208 (TILRGVVLKEYLT) are Cytoplasmic-facing. Positions 209–224 (LKAFVAKVVALTAGLG) form an intramembrane region, helical. The segment at residues 225–230 (SGIPVG) is an intramembrane region (note=Loop between two helices). Residues 230–234 (GKEGP) carry the Selectivity filter part_2 motif. Residues 231 to 246 (KEGPFVHIASICAAVL) constitute an intramembrane region (helical). Over 247–268 (SKFMSMFSGVYEQPYYYTDILT) the chain is Cytoplasmic. 2 intramembrane regions (helical) span residues 269–280 (VGCAVGVGCCFG) and 281–290 (TPLGGVLFSI). At 291–301 (EVTSTYFAVRN) the chain is on the cytoplasmic side. A helical membrane pass occupies residues 302 to 321 (YWRGFFAATFSAFVFRVLAV). The Extracellular segment spans residues 322 to 347 (WNKDAVTITALFRTNFRMDFPFDLKE). The chain crosses the membrane as a helical span at residues 348–376 (LPAFAVIGICCGFLGAVFVYLHRQVMLGV). Over 377-390 (RKHKCLSQFLAKHR) the chain is Cytoplasmic. A helical membrane pass occupies residues 391 to 408 (LLYPGIVTFVIASLTFPP). The Extracellular segment spans residues 409-414 (GMGQFM). Positions 415-418 (AGEL) form an intramembrane region, note=Loop between two helices. Positions 419-426 (MPREAIST) form an intramembrane region, helical. At 427–457 (LFDNNTWVKHIGDPQSLGQSAVWLHPQVNVI) the chain is on the extracellular side. Positions 458–475 (IIILLFFVMKFWMSIVAT) form an intramembrane region, helical. Positions 476-482 (TMPIPCG) form an intramembrane region, note=Loop between two helices. A Selectivity filter part_3 motif is present at residues 482–486 (GGFMP). The helical intramembrane region spans 483 to 498 (GFMPVFVLGAAFGRLV). F484 contacts chloride. Residues 499-521 (GEIMAMLFPEGILFDDIIYKILP) lie on the Extracellular side of the membrane. The segment at residues 522–538 (GGYAVIGAAALTGAVSH) is an intramembrane region (helical). The segment at residues 539–540 (TV) is an intramembrane region (note=Loop between two helices). The helical intramembrane region spans 541–554 (STAVICFELTGQIA). Residues 555–557 (HIL) are Extracellular-facing. Residues 558–571 (PMMVAVILANMVAQ) constitute an intramembrane region (helical). The note=Loop between two helices intramembrane region spans 572–575 (SLQP). The helical intramembrane region spans 576-578 (SLY). Y578 is a chloride binding site. Residues 579–994 (DSIIQVKKLP…DEEDEDELIL (416 aa)) lie on the Cytoplasmic side of the membrane. The CBS 1 domain maps to 609 to 668 (MVRDVKFVSASCTYGELRNLLQATTVKTLPLVDSKDSMILLGSVERSELQSLLQRHLCAE). The tract at residues 710–770 (EDEDEDLSRK…PEASDSADQR (61 aa)) is disordered. Residues 725-739 (TPAPPPPSPPPPPSQ) show a composition bias toward pro residues. In terms of domain architecture, CBS 2 spans 827–882 (IDQSPFQLVEQTTLHKTHTLFSLLGLHLAYVTSMGKLRGVLALEELQKAIEGHTKS). Disordered stretches follow at residues 886–954 (LRPP…ARAE) and 971–994 (ELAD…ELIL). The residue at position 892 (S892) is a Phosphoserine. The span at 933-943 (PETPVPPPSPE) shows a compositional bias: pro residues. Positions 985 to 994 (DEEDEDELIL) are enriched in acidic residues.

This sequence belongs to the chloride channel (TC 2.A.49) family. ClC-1/CLCN1 subfamily. In terms of assembly, homodimer. Predominantly expressed in skeletal muscles.

Its subcellular location is the cell membrane. The protein localises to the sarcolemma. It is found in the T-tubule. The catalysed reaction is chloride(in) = chloride(out). It carries out the reaction thiocyanate(in) = thiocyanate(out). It catalyses the reaction bromide(in) = bromide(out). The enzyme catalyses nitrate(in) = nitrate(out). The catalysed reaction is iodide(out) = iodide(in). Modulated by membrane voltage with depolarization favouring channel opening and hyperpolarization favouring channel closure. Inhibited by acidic pH and ATP binding due to a shift of voltage dependence of common gating to more positive voltages. Inhibited by 9-anthracene-carboxylic. In terms of biological role, voltage-gated chloride channel involved in skeletal muscle excitability. Generates most of the plasma membrane chloride conductance in skeletal muscle fibers, stabilizes the resting membrane potential and contributes to the repolarization phase during action potential firing. Forms a homodimeric channel where each subunit has its own ion conduction pathway. Conducts double-barreled currents controlled by two types of gates, two fast glutamate gates that control each subunit independently and a slow common gate that opens and shuts off both subunits simultaneously. Has a significant open probability at muscle resting potential and is further activated upon membrane depolarization. Permeable to small monovalent anions with ion selectivity for chloride &gt; thiocyanate &gt; bromide &gt; nitrate &gt; iodide. This chain is Chloride channel protein 1 (Clcn1), found in Mus musculus (Mouse).